Consider the following 330-residue polypeptide: Probable integrase/recombinase protein MJ0367 (330 aa).

Residues 22-112 (IEETDKIKEY…LLKVFYRVLR (91 aa)) form the Core-binding (CB) domain. The 190-residue stretch at 136-325 (QHYDAVDAEM…RAESLEFIKK (190 aa)) folds into the Tyr recombinase domain. Active-site residues include Arg-177, Lys-202, His-275, Arg-278, and His-301. Tyr-310 (O-(3'-phospho-DNA)-tyrosine intermediate) is an active-site residue.

It belongs to the 'phage' integrase family.

This is Probable integrase/recombinase protein MJ0367 from Methanocaldococcus jannaschii (strain ATCC 43067 / DSM 2661 / JAL-1 / JCM 10045 / NBRC 100440) (Methanococcus jannaschii).